Here is a 129-residue protein sequence, read N- to C-terminus: Cytochrome c' (129 aa).

Residues Arg-12, Gln-13, Thr-69, Glu-70, Cys-119, Cys-122, and His-123 each coordinate heme c.

In terms of processing, binds 1 heme c group covalently per subunit.

Functionally, cytochrome c' is the most widely occurring bacterial c-type cytochrome. Cytochromes c' are high-spin proteins and the heme has no sixth ligand. Their exact function is not known. The sequence is that of Cytochrome c' from Rubrivivax gelatinosus (Rhodocyclus gelatinosus).